The sequence spans 188 residues: ATP synthase subunit b (188 aa).

A helical transmembrane segment spans residues 7–26; that stretch reads TAAAGAMTLFFASMAYASGD.

Belongs to the ATPase B chain family. As to quaternary structure, F-type ATPases have 2 components, F(1) - the catalytic core - and F(0) - the membrane proton channel. F(1) has five subunits: alpha(3), beta(3), gamma(1), delta(1), epsilon(1). F(0) has three main subunits: a(1), b(2) and c(10-14). The alpha and beta chains form an alternating ring which encloses part of the gamma chain. F(1) is attached to F(0) by a central stalk formed by the gamma and epsilon chains, while a peripheral stalk is formed by the delta and b chains.

The protein localises to the cell inner membrane. Its function is as follows. F(1)F(0) ATP synthase produces ATP from ADP in the presence of a proton or sodium gradient. F-type ATPases consist of two structural domains, F(1) containing the extramembraneous catalytic core and F(0) containing the membrane proton channel, linked together by a central stalk and a peripheral stalk. During catalysis, ATP synthesis in the catalytic domain of F(1) is coupled via a rotary mechanism of the central stalk subunits to proton translocation. Component of the F(0) channel, it forms part of the peripheral stalk, linking F(1) to F(0). The sequence is that of ATP synthase subunit b from Nitratidesulfovibrio vulgaris (strain DP4) (Desulfovibrio vulgaris).